Reading from the N-terminus, the 136-residue chain is Ig kappa chain V-V region MOPC 21 (136 aa).

The first 29 residues, 1–29, serve as a signal peptide directing secretion; that stretch reads MHQTSMGIKMESHTLVFISILLCLYGADG. Residues 30–52 form a framework-1 region; that stretch reads NIVMTQSPKSMSMSVGERVTLTC. The complementarity-determining-1 stretch occupies residues 53 to 63; sequence KASENVVTYVS. The interval 64 to 78 is framework-2; that stretch reads WYQQKPEQSPKLLIY. The tract at residues 79 to 85 is complementarity-determining-2; sequence GASNRYT. A framework-3 region spans residues 86 to 117; sequence GVPDRFTGSGSATDFTLTISSVQAEDLADYHC. The tract at residues 118–126 is complementarity-determining-3; the sequence is GQGYSYPYT. The interval 127–136 is framework-4; it reads FGGGTKLEIK.

This Mus musculus (Mouse) protein is Ig kappa chain V-V region MOPC 21.